The primary structure comprises 851 residues: MAKTNISPGMQQYLDIKKDYPDAFLLFRMGDFYELFYDDAVKAAQLLEIGLTSRNKNAENPIPMAGVPHHSAQQYIDVLIELGYKVAVAEQMEDPKQAVGVVKREVVQVITPGTVVDSAKPDSANNFLVAVDFDGCRYGLAYMDVSTGEFCVTDLADFTSVRSEIQNLKAKEVLLGFDLSEEEQTILVKQMNLLLSYEETVYEDKSLIDGQLTTVELTAAGKLLQYVHKTQMRELSHLQALVHYEIKDYLQMSYATKSSLDLVENARTNKKHGSLYWLLDETKTAMGMRLLRSWIDRPLVSKEAILERQEIIQVFLNAFIERTDLSNSLKGVYDIERLSSRVSFGKANPKDLLQLGHTLAQVPYIKAILESFDSPCVDKLVNDIDSLPELEYLIRTAIDPDAPATISEGSIIRTGFDERLDHYRKVMREGTGWIADIEAKERQASGINNLKIDYNKKDGYYFHVTTSNLSLVPEHFFRKATLKNSERYGTAELAKIEGQMLEAREESSSLEYDIFMCIRAQVETYINRLQKLAKILATVDVLQSLAVVAETNHYIRPQFNDNHVITIQEGRHAVVEKVMGVQEYIPNSISFDQQTSIQLITGPNMSGKSTYMRQLALTVIMAQMGSFVAADHVDLPLFDAIFTRIGAADDLISGQSTFMVEMMEANQAIKRASDNSLILFDELGRGTATYDGMALAQAIIEYIHDRVGAKTIFATHYHELTDLSTKLTSLVNVHVATLEKDGDVTFLHKIAEGPADKSYGIHVAKIAGLPKSLLKRADEVLTRLETQSRSTEIMSVPPQVESSSAVRQGQLSLFGDEEKAHEIRQALEAIDVMNMTPLQAMTTLYELKKLL.

602-609 (GPNMSGKS) serves as a coordination point for ATP.

This sequence belongs to the DNA mismatch repair MutS family.

In terms of biological role, this protein is involved in the repair of mismatches in DNA. It is possible that it carries out the mismatch recognition step. This protein has a weak ATPase activity. The protein is DNA mismatch repair protein MutS of Streptococcus pyogenes serotype M6 (strain ATCC BAA-946 / MGAS10394).